Consider the following 206-residue polypeptide: MGTWILFACLVGAAFAMPLPPHPGHPGYINFSYENSHSQAINVDRIALVLTPLKWYQSMIRPPYSSYGYEPMGGWLHHQIIPVVSQQHPLTHTLQSHHHIPVVPAQQPRVRQQALMPVPGQQSMTPTQHHQPNLPLPAQQPFQPQPVQPQPHQPMQPQPPVQPMQPLLPQPPLPPMFPLRPLPPILPDLHLEAWPATDKTKQEEVD.

A signal peptide spans 1–16 (MGTWILFACLVGAAFA). The segment at 118 to 180 (VPGQQSMTPT…PPLPPMFPLR (63 aa)) is disordered. Over residues 128 to 142 (QHHQPNLPLPAQQPF) the composition is skewed to low complexity. Pro residues predominate over residues 143–180 (QPQPVQPQPHQPMQPQPPVQPMQPLLPQPPLPPMFPLR).

It belongs to the amelogenin family.

It localises to the secreted. The protein resides in the extracellular space. The protein localises to the extracellular matrix. In terms of biological role, plays a role in biomineralization. Seems to regulate the formation of crystallites during the secretory stage of tooth enamel development. Thought to play a major role in the structural organization and mineralization of developing enamel. This chain is Amelogenin, Y isoform (AMELY), found in Homo sapiens (Human).